We begin with the raw amino-acid sequence, 209 residues long: Uracil phosphoribosyltransferase (209 aa).

5-phospho-alpha-D-ribose 1-diphosphate is bound by residues arginine 77, arginine 102, and 129–137 (DPMLATGSS). Residues isoleucine 192 and 197–199 (GDA) contribute to the uracil site. Position 198 (aspartate 198) interacts with 5-phospho-alpha-D-ribose 1-diphosphate.

It belongs to the UPRTase family. The cofactor is Mg(2+).

The catalysed reaction is UMP + diphosphate = 5-phospho-alpha-D-ribose 1-diphosphate + uracil. It functions in the pathway pyrimidine metabolism; UMP biosynthesis via salvage pathway; UMP from uracil: step 1/1. Allosterically activated by GTP. Its function is as follows. Catalyzes the conversion of uracil and 5-phospho-alpha-D-ribose 1-diphosphate (PRPP) to UMP and diphosphate. This is Uracil phosphoribosyltransferase from Metamycoplasma hominis (Mycoplasma hominis).